The following is a 156-amino-acid chain: Transcription elongation factor GreA (156 aa).

The stretch at 1-84 (MAKYTISKHR…IEDVLRSTDE (84 aa)) forms a coiled coil.

Belongs to the GreA/GreB family.

Its function is as follows. Necessary for efficient RNA polymerase transcription elongation past template-encoded arresting sites. The arresting sites in DNA have the property of trapping a certain fraction of elongating RNA polymerases that pass through, resulting in locked ternary complexes. Cleavage of the nascent transcript by cleavage factors such as GreA or GreB allows the resumption of elongation from the new 3'terminus. GreA releases sequences of 2 to 3 nucleotides. The chain is Transcription elongation factor GreA from Ureaplasma parvum serovar 3 (strain ATCC 27815 / 27 / NCTC 11736).